A 220-amino-acid polypeptide reads, in one-letter code: Apoptosis regulator BALF1 (220 aa).

This sequence belongs to the Epstein-Barr virus BALF1 family. Interacts with BHRF1; this interaction modulates BHRF1 activity. Interacts with host BAX and BAK1.

The protein localises to the host cytoplasm. In terms of biological role, modulates the antiapoptotic activity of the viral protein BHRF1. May also play an active part in oncogenesis in Burkitt's lymphomy and nasopharyngeal carcinoma. This Homo sapiens (Human) protein is Apoptosis regulator BALF1.